The primary structure comprises 379 residues: Gonadotropin-releasing hormone II receptor (379 aa).

At 1-45 the chain is on the extracellular side; it reads MSGNTTLLLSNPTNVLDNSSVLNVSVSPPVLKWETPTFTTAARFR. Residues N4, N18, and N23 are each glycosylated (N-linked (GlcNAc...) asparagine). The chain crosses the membrane as a helical span at residues 46-65; that stretch reads VAATLVLFVFAAASNLSVLL. At 66-80 the chain is on the cytoplasmic side; the sequence is SVTRGRGRRLASHLR. The helical transmembrane segment at 81-100 threads the bilayer; it reads PLIASLASADLVMTFVVMPL. Topologically, residues 101–118 are extracellular; sequence DAVWNVTVQWYAGDAMCK. The N-linked (GlcNAc...) asparagine glycan is linked to N105. A disulfide bond links C117 and C194. The helical transmembrane segment at 119–140 threads the bilayer; the sequence is LMCFLKLFAMHSAAFILVVVSL. Residues 141 to 167 are Cytoplasmic-facing; sequence DRHHAILHPLDTLDAGRRNRRMLLTAW. A helical membrane pass occupies residues 168–184; that stretch reads ILSLLLASPQLFIFRAI. Over 185-210 the chain is Extracellular; sequence KAKGVDFVQCATHGSFQQHWQETAYN. Residues 211 to 230 traverse the membrane as a helical segment; sequence MFHFVTLYVFPLLVMSLCYT. Residues 231–283 are Cytoplasmic-facing; sequence RILVEINRQMHRSKDKAGEPCLRRSGTDMIPKARMKTLKMTIIIVASFVICWT. Residues 284–302 form a helical membrane-spanning segment; that stretch reads PYYLLGIWYWFQPQMLHVI. Topologically, residues 303 to 308 are extracellular; that stretch reads PDYVHH. Residues 309 to 328 traverse the membrane as a helical segment; the sequence is VFFVFGNLNTCCDPVIYGFF. The Cytoplasmic portion of the chain corresponds to 329–379; sequence TPSFRADLSRCFCWRNQNASAKSLPHFSGHRREVSGEAESDLGSGDQPSGQ. The segment at 355 to 379 is disordered; sequence FSGHRREVSGEAESDLGSGDQPSGQ.

Belongs to the G-protein coupled receptor 1 family. Post-translationally, phosphorylated on the C-terminal cytoplasmic tail.

The protein resides in the cell membrane. Receptor for gonadotropin releasing hormone II (GnRH II). This receptor mediates its action by association with G proteins that activate a phosphatidylinositol-calcium second messenger system. The sequence is that of Gonadotropin-releasing hormone II receptor from Clarias gariepinus (North African catfish).